Consider the following 357-residue polypeptide: Probable cinnamyl alcohol dehydrogenase (357 aa).

Zn(2+) is bound at residue Cys47. An NADP(+)-binding site is contributed by Thr49. Positions 69, 70, 100, 103, 106, 114, and 163 each coordinate Zn(2+). NADP(+) contacts are provided by residues Thr167, 188 to 193, 211 to 216, Thr251, Gly275, and 298 to 300; these read GLGGVG, SSSDKK, and SFI.

Belongs to the zinc-containing alcohol dehydrogenase family. As to quaternary structure, homodimer. It depends on Zn(2+) as a cofactor.

It carries out the reaction (E)-cinnamyl alcohol + NADP(+) = (E)-cinnamaldehyde + NADPH + H(+). It catalyses the reaction (E)-coniferol + NADP(+) = (E)-coniferaldehyde + NADPH + H(+). The catalysed reaction is (E)-sinapyl alcohol + NADP(+) = (E)-sinapaldehyde + NADPH + H(+). The enzyme catalyses (E)-4-coumaroyl alcohol + NADP(+) = (E)-4-coumaraldehyde + NADPH + H(+). It carries out the reaction (E)-caffeyl alcohol + NADP(+) = (E)-caffeyl aldehyde + NADPH + H(+). It participates in aromatic compound metabolism; phenylpropanoid biosynthesis. Involved in lignin biosynthesis. Catalyzes the final step specific for the production of lignin monomers. Catalyzes the NADPH-dependent reduction of coniferaldehyde, 5-hydroxyconiferaldehyde, sinapaldehyde, 4-coumaraldehyde and caffeyl aldehyde to their respective alcohols. This is Probable cinnamyl alcohol dehydrogenase from Populus deltoides (Eastern poplar).